Consider the following 481-residue polypeptide: Glutamyl-tRNA(Gln) amidotransferase subunit A (481 aa).

Residues Lys77 and Ser151 each act as charge relay system in the active site. Ser175 serves as the catalytic Acyl-ester intermediate.

It belongs to the amidase family. GatA subfamily. Heterotrimer of A, B and C subunits.

It carries out the reaction L-glutamyl-tRNA(Gln) + L-glutamine + ATP + H2O = L-glutaminyl-tRNA(Gln) + L-glutamate + ADP + phosphate + H(+). Its function is as follows. Allows the formation of correctly charged Gln-tRNA(Gln) through the transamidation of misacylated Glu-tRNA(Gln) in organisms which lack glutaminyl-tRNA synthetase. The reaction takes place in the presence of glutamine and ATP through an activated gamma-phospho-Glu-tRNA(Gln). This chain is Glutamyl-tRNA(Gln) amidotransferase subunit A, found in Rubrobacter xylanophilus (strain DSM 9941 / JCM 11954 / NBRC 16129 / PRD-1).